Reading from the N-terminus, the 319-residue chain is Ferrochelatase (319 aa).

Positions 193 and 274 each coordinate Fe cation.

Belongs to the ferrochelatase family.

It localises to the cytoplasm. The enzyme catalyses heme b + 2 H(+) = protoporphyrin IX + Fe(2+). Its pathway is porphyrin-containing compound metabolism; protoheme biosynthesis; protoheme from protoporphyrin-IX: step 1/1. Its function is as follows. Catalyzes the ferrous insertion into protoporphyrin IX. The polypeptide is Ferrochelatase (Actinobacillus pleuropneumoniae serotype 7 (strain AP76)).